A 253-amino-acid polypeptide reads, in one-letter code: Phosphonates import ATP-binding protein PhnC (253 aa).

In terms of domain architecture, ABC transporter spans 4 to 247 (VRFEGVTKRF…QAVAMIYRAG (244 aa)). Residue 36-43 (GLSGSGKS) coordinates ATP.

This sequence belongs to the ABC transporter superfamily. Phosphonates importer (TC 3.A.1.9.1) family. As to quaternary structure, the complex is composed of two ATP-binding proteins (PhnC), two transmembrane proteins (PhnE) and a solute-binding protein (PhnD).

The protein localises to the cell membrane. It carries out the reaction phosphonate(out) + ATP + H2O = phosphonate(in) + ADP + phosphate + H(+). In terms of biological role, part of the ABC transporter complex PhnCDE involved in phosphonates import. Responsible for energy coupling to the transport system. The polypeptide is Phosphonates import ATP-binding protein PhnC (Frankia casuarinae (strain DSM 45818 / CECT 9043 / HFP020203 / CcI3)).